A 245-amino-acid polypeptide reads, in one-letter code: uncharacterized protein (245 aa).

Helical transmembrane passes span 10 to 30 (FYTL…SPWY), 94 to 114 (TLAF…YVHI), 134 to 154 (VLIG…FLII), and 196 to 216 (RGWI…IYCW).

The protein resides in the membrane. This is an uncharacterized protein from Dictyostelium discoideum (Social amoeba).